Reading from the N-terminus, the 302-residue chain is Short-chain dehydrogenase/reductase 1 (302 aa).

Residues 20–23 (NKGL), arginine 43, 71–72 (DV), and asparagine 98 contribute to the NADP(+) site. Serine 170 provides a ligand contact to substrate. NADP(+) is bound by residues tyrosine 226, lysine 230, and 257 to 262 (VKTDIN). The Proton acceptor role is filled by tyrosine 226.

It belongs to the short-chain dehydrogenases/reductases (SDR) family. In terms of tissue distribution, mainly expressed in flowers and flower buds, to a lesser extent in leaves and, at low levels, in stems and roots.

It participates in secondary metabolite biosynthesis; terpenoid biosynthesis. Component of the oleanane-type triterpene saponins (e.g. saponarioside A and saponarioside B) biosynthetic pathway, leading to the production of natural products with detergent properties used as traditional sources of soap. A dehydrogenase/reductase that, together with UGT74CD1, mediates the conversion of QA-tri to QA-triF; UGT74CD1 may transfer 4-keto-6-deoxy-glucose to QA-tri, which is in turn reduced to D-fucose by SDR1, thus leading to QA-triF formation via the initiation of the C-28 sugar chain. This is Short-chain dehydrogenase/reductase 1 from Saponaria officinalis (Common soapwort).